Consider the following 207-residue polypeptide: Probable GTP-binding protein EngB (207 aa).

One can recognise an EngB-type G domain in the interval 23–197 (AGIEVVFAGR…ETVIGRWLFA (175 aa)). Residues 31-38 (GRSNAGKS), 58-62 (GRTQL), 76-79 (DLPG), 143-146 (TKAD), and 176-178 (FSS) each bind GTP. Mg(2+)-binding residues include Ser38 and Thr60.

It belongs to the TRAFAC class TrmE-Era-EngA-EngB-Septin-like GTPase superfamily. EngB GTPase family. Requires Mg(2+) as cofactor.

In terms of biological role, necessary for normal cell division and for the maintenance of normal septation. The chain is Probable GTP-binding protein EngB from Methylobacillus flagellatus (strain ATCC 51484 / DSM 6875 / VKM B-1610 / KT).